Reading from the N-terminus, the 66-residue chain is Large ribosomal subunit protein bL33c (66 aa).

Belongs to the bacterial ribosomal protein bL33 family.

It localises to the plastid. This is Large ribosomal subunit protein bL33c from Cuscuta gronovii (Common dodder).